The chain runs to 362 residues: DNA replication and repair protein RecF (362 aa).

Residue 30–37 (GLNAQGKS) participates in ATP binding.

It belongs to the RecF family.

It is found in the cytoplasm. In terms of biological role, the RecF protein is involved in DNA metabolism; it is required for DNA replication and normal SOS inducibility. RecF binds preferentially to single-stranded, linear DNA. It also seems to bind ATP. The chain is DNA replication and repair protein RecF from Thermoanaerobacter pseudethanolicus (strain ATCC 33223 / 39E) (Clostridium thermohydrosulfuricum).